A 381-amino-acid polypeptide reads, in one-letter code: MPFSNTHNTLKLRFPAEDEFPDLSAHNNHMAKVLTPEMDAELRAKSTPSGFTLDDVIQTGVDNPGHPFIMTVGCVAGDEESYEAFKELFDPIIEDRHGGYKPSDEHKTDLNPDNLQGGDDLDPNYVLSSRVRTGRSIRGFCLPPHCSRGERRAVEKLAVEALSSLDGDLAGRYYALKSMTEAEQQQLIDDHFLFDKPVSPLLLASGMARDWPDARGIWHNDNKTFLVWINEEDHLRVISMQKGGNMKEVFTRFCNGLTQIETLFKSKNYEFMWNPHLGYILTCPSNLGTGLRAGVHIKLPHLGQHEKFSEVLKRLRLQKRGTGGVDTAAVGGVFDVSNADRLGFSEVELVQMVVDGVKLLIEMEQRLEQGQAIDDLMPAQK.

Ser4 is subject to Phosphoserine. In terms of domain architecture, Phosphagen kinase N-terminal spans 11–98 (KLRFPAEDEF…FDPIIEDRHG (88 aa)). Thr35 is subject to Phosphothreonine. Lys45 is covalently cross-linked (Glycyl lysine isopeptide (Lys-Gly) (interchain with G-Cter in ubiquitin)). Val72 lines the creatine pocket. Basic and acidic residues predominate over residues 96–110 (RHGGYKPSDEHKTDL). The tract at residues 96–123 (RHGGYKPSDEHKTDLNPDNLQGGDDLDP) is disordered. Residues Lys101 and Lys107 each participate in a glycyl lysine isopeptide (Lys-Gly) (interchain with G-Cter in ubiquitin) cross-link. Tyr125 carries the post-translational modification Phosphotyrosine. Residues 125-367 (YVLSSRVRTG…KLLIEMEQRL (243 aa)) form the Phosphagen kinase C-terminal domain. ATP is bound by residues 128 to 132 (SSRVR), Arg130, Arg132, and His191. Residues 130–138 (RVRTGRSIR) form an internal MTS-like signal region. Position 199 is a phosphoserine (Ser199). Glu232 serves as a coordination point for creatine. Arg236 provides a ligand contact to ATP. The residue at position 269 (Tyr269) is a 3'-nitrotyrosine. Creatine is bound at residue Ser285. ATP is bound at residue Arg292. Ser309 is modified (phosphoserine). ATP-binding positions include Arg320, 320–325 (RGTGGV), and Asp335. Position 322 is a phosphothreonine (Thr322). Lys381 participates in a covalent cross-link: Glycyl lysine isopeptide (Lys-Gly) (interchain with G-Cter in ubiquitin).

Belongs to the ATP:guanido phosphotransferase family. Dimer of identical or non-identical chains, which can be either B (brain type) or M (muscle type). With MM being the major form in skeletal muscle and myocardium, MB existing in myocardium, and BB existing in many tissues, especially brain. Interacts with SLC12A6 (via C-terminus); the interaction may be required for SLC12A6 potassium-chloride cotransport activity. Post-translationally, ubiquitinated by the ECS(ASB9) complex, leading to its degradation by the proteasome.

Its subcellular location is the cytoplasm. It localises to the cytosol. It is found in the mitochondrion. The protein localises to the cell membrane. The catalysed reaction is creatine + ATP = N-phosphocreatine + ADP + H(+). Its function is as follows. Reversibly catalyzes the transfer of phosphate between ATP and various phosphogens (e.g. creatine phosphate). Creatine kinase isoenzymes play a central role in energy transduction in tissues with large, fluctuating energy demands, such as skeletal muscle, heart, brain and spermatozoa. Acts as a key regulator of adaptive thermogenesis as part of the futile creatine cycle: localizes to the mitochondria of thermogenic fat cells and acts by mediating phosphorylation of creatine to initiate a futile cycle of creatine phosphorylation and dephosphorylation. During the futile creatine cycle, creatine and N-phosphocreatine are in a futile cycle, which dissipates the high energy charge of N-phosphocreatine as heat without performing any mechanical or chemical work. In Oryctolagus cuniculus (Rabbit), this protein is Creatine kinase B-type (CKB).